Reading from the N-terminus, the 299-residue chain is Nucleotide-binding protein SCO1952 (299 aa).

23–30 is an ATP binding site; the sequence is GMSGAGRS. GTP is bound at residue 74–77; it reads DVRG.

The protein belongs to the RapZ-like family.

Its function is as follows. Displays ATPase and GTPase activities. This is Nucleotide-binding protein SCO1952 from Streptomyces coelicolor (strain ATCC BAA-471 / A3(2) / M145).